A 336-amino-acid polypeptide reads, in one-letter code: MIEADRLISAGATIAEDVADRAIRPKLLAEYVGQPQVRSQMEIFIQAAKRRGDALDHLLIFGPPGLGKTTLANIVANEMGVNLRTTSGPVLEKAGDLAAMLTNLEPHDVLFIDEIHRLSPVVEEVLYPAMEDYQLDIMIGEGPAARSIKIDLPPFTLIGATTRAGSLTSPLRDRFGIVQRLEFYQVPDLQHIVGRSARHMGLEMSDDGALEVARRARGTPRIANRLLRRVRDFAEVKHDGAISAEIAAQALDMLNVDAEGFDYMDRKLLLAVIDKFFGGPVGLDNLAAAIGEERETIEDVLEPYLIQQGFLQRTPRGRMATVRAWNHFGITPPEMP.

The segment at 4–184 is large ATPase domain (RuvB-L); it reads ADRLISAGAT…FGIVQRLEFY (181 aa). ATP contacts are provided by residues I23, R24, G65, K68, T69, T70, 131-133, R174, Y184, and R221; that span reads EDY. Residue T69 coordinates Mg(2+). Residues 185–255 form a small ATPAse domain (RuvB-S) region; it reads QVPDLQHIVG…IAAQALDMLN (71 aa). The head domain (RuvB-H) stretch occupies residues 258-336; the sequence is AEGFDYMDRK…HFGITPPEMP (79 aa). R294, R313, and R318 together coordinate DNA.

Belongs to the RuvB family. As to quaternary structure, homohexamer. Forms an RuvA(8)-RuvB(12)-Holliday junction (HJ) complex. HJ DNA is sandwiched between 2 RuvA tetramers; dsDNA enters through RuvA and exits via RuvB. An RuvB hexamer assembles on each DNA strand where it exits the tetramer. Each RuvB hexamer is contacted by two RuvA subunits (via domain III) on 2 adjacent RuvB subunits; this complex drives branch migration. In the full resolvosome a probable DNA-RuvA(4)-RuvB(12)-RuvC(2) complex forms which resolves the HJ.

Its subcellular location is the cytoplasm. The catalysed reaction is ATP + H2O = ADP + phosphate + H(+). Its function is as follows. The RuvA-RuvB-RuvC complex processes Holliday junction (HJ) DNA during genetic recombination and DNA repair, while the RuvA-RuvB complex plays an important role in the rescue of blocked DNA replication forks via replication fork reversal (RFR). RuvA specifically binds to HJ cruciform DNA, conferring on it an open structure. The RuvB hexamer acts as an ATP-dependent pump, pulling dsDNA into and through the RuvAB complex. RuvB forms 2 homohexamers on either side of HJ DNA bound by 1 or 2 RuvA tetramers; 4 subunits per hexamer contact DNA at a time. Coordinated motions by a converter formed by DNA-disengaged RuvB subunits stimulates ATP hydrolysis and nucleotide exchange. Immobilization of the converter enables RuvB to convert the ATP-contained energy into a lever motion, pulling 2 nucleotides of DNA out of the RuvA tetramer per ATP hydrolyzed, thus driving DNA branch migration. The RuvB motors rotate together with the DNA substrate, which together with the progressing nucleotide cycle form the mechanistic basis for DNA recombination by continuous HJ branch migration. Branch migration allows RuvC to scan DNA until it finds its consensus sequence, where it cleaves and resolves cruciform DNA. The protein is Holliday junction branch migration complex subunit RuvB of Salmonella agona (strain SL483).